The chain runs to 413 residues: Exodeoxyribonuclease 7 large subunit (413 aa).

The protein belongs to the XseA family. Heterooligomer composed of large and small subunits.

Its subcellular location is the cytoplasm. It catalyses the reaction Exonucleolytic cleavage in either 5'- to 3'- or 3'- to 5'-direction to yield nucleoside 5'-phosphates.. Bidirectionally degrades single-stranded DNA into large acid-insoluble oligonucleotides, which are then degraded further into small acid-soluble oligonucleotides. The polypeptide is Exodeoxyribonuclease 7 large subunit (Corynebacterium efficiens (strain DSM 44549 / YS-314 / AJ 12310 / JCM 11189 / NBRC 100395)).